We begin with the raw amino-acid sequence, 312 residues long: Ribonuclease Z (312 aa).

The Zn(2+) site is built by His-62, His-64, Asp-66, His-67, His-144, Asp-215, and His-273. Asp-66 functions as the Proton acceptor in the catalytic mechanism.

It belongs to the RNase Z family. As to quaternary structure, homodimer. Zn(2+) is required as a cofactor.

It catalyses the reaction Endonucleolytic cleavage of RNA, removing extra 3' nucleotides from tRNA precursor, generating 3' termini of tRNAs. A 3'-hydroxy group is left at the tRNA terminus and a 5'-phosphoryl group is left at the trailer molecule.. In terms of biological role, zinc phosphodiesterase, which displays some tRNA 3'-processing endonuclease activity. Probably involved in tRNA maturation, by removing a 3'-trailer from precursor tRNA. This is Ribonuclease Z from Prochlorococcus marinus (strain MIT 9301).